We begin with the raw amino-acid sequence, 106 residues long: Protein translation factor SUI1 homolog (106 aa).

It belongs to the SUI1 family.

Its function is as follows. Additional factor that functions in concert with eIF-2 and the initiator tRNA in directing the ribosome to the proper start site of translation. The protein is Protein translation factor SUI1 homolog of Acanthamoeba polyphaga mimivirus (APMV).